Here is a 197-residue protein sequence, read N- to C-terminus: Cytochrome c oxidase polypeptide 5, mitochondrial (197 aa).

A mitochondrion-targeting transit peptide spans 1–13 (MFLRSVTRAAARS). The Mitochondrial matrix portion of the chain corresponds to 14-129 (SAVPTTGLRS…KGENLKIFFK (116 aa)). Residues 130–147 (VAQLTLVSFGIFYVIHLF) form a helical membrane-spanning segment. The Mitochondrial intermembrane segment spans residues 148 to 197 (AKPQPKTMTKEWQEASNEYAKQEKINPIYGISAEGYEGKGFVQSPPAEKQ).

This sequence belongs to the cytochrome c oxidase IV family. Component of the cytochrome c oxidase (complex IV, CIV), a multisubunit enzyme composed of a catalytic core of 3 subunits and seevral supernumerary subunits. The complex exists as a monomer or a dimer and forms supercomplexes (SCs) in the inner mitochondrial membrane with ubiquinol-cytochrome c oxidoreductase (cytochrome b-c1 complex, complex III, CIII).

The protein localises to the mitochondrion inner membrane. The protein operates within energy metabolism; oxidative phosphorylation. In terms of biological role, component of the cytochrome c oxidase, the last enzyme in the mitochondrial electron transport chain which drives oxidative phosphorylation. The respiratory chain contains 3 multisubunit complexes succinate dehydrogenase (complex II, CII), ubiquinol-cytochrome c oxidoreductase (cytochrome b-c1 complex, complex III, CIII) and cytochrome c oxidase (complex IV, CIV), that cooperate to transfer electrons derived from NADH and succinate to molecular oxygen, creating an electrochemical gradient over the inner membrane that drives transmembrane transport and the ATP synthase. Cytochrome c oxidase is the component of the respiratory chain that catalyzes the reduction of oxygen to water. Electrons originating from reduced cytochrome c in the intermembrane space (IMS) are transferred via the dinuclear copper A center (CU(A)) of subunit 2 and heme A of subunit 1 to the active site in subunit 1, a binuclear center (BNC) formed by heme A3 and copper B (CU(B)). The BNC reduces molecular oxygen to 2 water molecules using 4 electrons from cytochrome c in the IMS and 4 protons from the mitochondrial matrix. The polypeptide is Cytochrome c oxidase polypeptide 5, mitochondrial (cox5) (Aspergillus niger).